A 1354-amino-acid polypeptide reads, in one-letter code: Phosphoribosylformylglycinamidine synthase (1354 aa).

Residues 327 to 338 (GATTGTGGRLRD), 407 to 409 (SGF), and Ala714 each bind ATP. Residues Asp715, Glu754, Asn758, and Asp918 each coordinate Mg(2+). Ser920 lines the ATP pocket. In terms of domain architecture, Glutamine amidotransferase type-1 spans 1087 to 1337 (VAVLREEGVN…EVSPTQSESP (251 aa)). Cys1180 serves as the catalytic Nucleophile. Catalysis depends on residues His1310 and Glu1312.

This sequence in the N-terminal section; belongs to the FGAMS family.

It carries out the reaction N(2)-formyl-N(1)-(5-phospho-beta-D-ribosyl)glycinamide + L-glutamine + ATP + H2O = 2-formamido-N(1)-(5-O-phospho-beta-D-ribosyl)acetamidine + L-glutamate + ADP + phosphate + H(+). The protein operates within purine metabolism; IMP biosynthesis via de novo pathway; 5-amino-1-(5-phospho-D-ribosyl)imidazole from N(2)-formyl-N(1)-(5-phospho-D-ribosyl)glycinamide: step 1/2. Phosphoribosylformylglycinamidine synthase involved in the purines biosynthetic pathway. Catalyzes the ATP-dependent conversion of formylglycinamide ribonucleotide (FGAR) and glutamine to yield formylglycinamidine ribonucleotide (FGAM) and glutamate. Because of its role in metabolisms, is involved in sleep regulation. This Drosophila melanogaster (Fruit fly) protein is Phosphoribosylformylglycinamidine synthase.